The chain runs to 197 residues: Guanylate kinase (197 aa).

The region spanning 6–191 (SKLIILSGPS…CVAQIEKIIS (186 aa)) is the Guanylate kinase-like domain. An ATP-binding site is contributed by 13 to 20 (GPSGVGKG).

Belongs to the guanylate kinase family.

The protein resides in the cytoplasm. It catalyses the reaction GMP + ATP = GDP + ADP. In terms of biological role, essential for recycling GMP and indirectly, cGMP. The sequence is that of Guanylate kinase from Mesomycoplasma hyopneumoniae (strain 232) (Mycoplasma hyopneumoniae).